Consider the following 490-residue polypeptide: Betaine aldehyde dehydrogenase (490 aa).

Residues Thr26, Ile27, and Asp93 each contribute to the K(+) site. 150 to 152 (GAW) is a binding site for NAD(+). The active-site Charge relay system is Lys162. 176–179 (KPSE) lines the NAD(+) pocket. Val180 serves as a coordination point for K(+). An NAD(+)-binding site is contributed by 230 to 233 (GVAS). Position 246 (Leu246) interacts with K(+). Catalysis depends on Glu252, which acts as the Proton acceptor. Residues Gly254, Cys286, and Glu387 each contribute to the NAD(+) site. Catalysis depends on Cys286, which acts as the Nucleophile. Cys286 carries the cysteine sulfenic acid (-SOH) modification. Residues Lys457 and Gly460 each contribute to the K(+) site. Glu464 acts as the Charge relay system in catalysis.

It belongs to the aldehyde dehydrogenase family. Dimer of dimers. The cofactor is K(+).

It carries out the reaction betaine aldehyde + NAD(+) + H2O = glycine betaine + NADH + 2 H(+). It participates in amine and polyamine biosynthesis; betaine biosynthesis via choline pathway; betaine from betaine aldehyde: step 1/1. In terms of biological role, involved in the biosynthesis of the osmoprotectant glycine betaine. Catalyzes the irreversible oxidation of betaine aldehyde to the corresponding acid. This is Betaine aldehyde dehydrogenase from Escherichia coli (strain 55989 / EAEC).